The following is a 345-amino-acid chain: Phenylalanine--tRNA ligase alpha subunit (345 aa).

Residue glutamate 259 coordinates Mg(2+).

The protein belongs to the class-II aminoacyl-tRNA synthetase family. Phe-tRNA synthetase alpha subunit type 1 subfamily. Tetramer of two alpha and two beta subunits. Mg(2+) is required as a cofactor.

It is found in the cytoplasm. The enzyme catalyses tRNA(Phe) + L-phenylalanine + ATP = L-phenylalanyl-tRNA(Phe) + AMP + diphosphate + H(+). The protein is Phenylalanine--tRNA ligase alpha subunit of Lactococcus lactis subsp. cremoris (strain MG1363).